The sequence spans 237 residues: MQKLAELYRGKAKTVYTTEDPDLLILTFRNDTSALDGQRIEQFDRKGMINNNFNYFIMTKLAEAGIPTQIVRLLSDNEMLVKKLAMVPVECVVRNRAAGSLVKRLGVEEGLVLDPPLFDLFLKNDAMHDPMINESYCTTFGWVSEPHLARMKQLTYQANDVLSKIFDDAGLILVDFKLEFGLFNGEIVLGDEFSPDGSRLWDKTTLDKMDKDRFRQNLGGVIEAYEEVAKRIGVTLD.

It belongs to the SAICAR synthetase family.

The catalysed reaction is 5-amino-1-(5-phospho-D-ribosyl)imidazole-4-carboxylate + L-aspartate + ATP = (2S)-2-[5-amino-1-(5-phospho-beta-D-ribosyl)imidazole-4-carboxamido]succinate + ADP + phosphate + 2 H(+). It functions in the pathway purine metabolism; IMP biosynthesis via de novo pathway; 5-amino-1-(5-phospho-D-ribosyl)imidazole-4-carboxamide from 5-amino-1-(5-phospho-D-ribosyl)imidazole-4-carboxylate: step 1/2. This chain is Phosphoribosylaminoimidazole-succinocarboxamide synthase, found in Sodalis glossinidius (strain morsitans).